Here is a 200-residue protein sequence, read N- to C-terminus: Large ribosomal subunit protein uL4 (200 aa).

The disordered stretch occupies residues 42–65; that stretch reads TRAQKTRSEVSGGGAKPWRQKGTG.

It belongs to the universal ribosomal protein uL4 family. As to quaternary structure, part of the 50S ribosomal subunit.

In terms of biological role, one of the primary rRNA binding proteins, this protein initially binds near the 5'-end of the 23S rRNA. It is important during the early stages of 50S assembly. It makes multiple contacts with different domains of the 23S rRNA in the assembled 50S subunit and ribosome. Functionally, forms part of the polypeptide exit tunnel. In Vibrio campbellii (strain ATCC BAA-1116), this protein is Large ribosomal subunit protein uL4.